The following is a 255-amino-acid chain: Probable transcriptional regulatory protein PCC7424_2775 (255 aa).

The protein belongs to the TACO1 family.

It is found in the cytoplasm. The chain is Probable transcriptional regulatory protein PCC7424_2775 from Gloeothece citriformis (strain PCC 7424) (Cyanothece sp. (strain PCC 7424)).